The sequence spans 171 residues: Large ribosomal subunit protein uL10 (171 aa).

This sequence belongs to the universal ribosomal protein uL10 family. Part of the ribosomal stalk of the 50S ribosomal subunit. The N-terminus interacts with L11 and the large rRNA to form the base of the stalk. The C-terminus forms an elongated spine to which L12 dimers bind in a sequential fashion forming a multimeric L10(L12)X complex.

In terms of biological role, forms part of the ribosomal stalk, playing a central role in the interaction of the ribosome with GTP-bound translation factors. The sequence is that of Large ribosomal subunit protein uL10 from Paramagnetospirillum magneticum (strain ATCC 700264 / AMB-1) (Magnetospirillum magneticum).